Reading from the N-terminus, the 130-residue chain is Acidic phospholipase A2 daboiatoxin B chain (130 aa).

The signal sequence occupies residues 1–8; sequence MCLIGVEG. Cystine bridges form between Cys34-Cys123, Cys36-Cys52, Cys51-Cys103, Cys57-Cys130, Cys58-Cys96, Cys65-Cys89, and Cys83-Cys94. The Ca(2+) site is built by Tyr35, Gly37, and Gly39. The active site involves His55. A Ca(2+)-binding site is contributed by Asp56. Residue Asp97 is part of the active site.

It belongs to the phospholipase A2 family. Group II subfamily. D49 sub-subfamily. As to quaternary structure, heterodimer of an acidic protein having phospholipase A2 activity (B chain) and an A chain which weakly inhibits the B chain enzymatic activity but potentiates its lethal potency. The cofactor is Ca(2+). Expressed by the venom gland.

The protein localises to the secreted. It catalyses the reaction a 1,2-diacyl-sn-glycero-3-phosphocholine + H2O = a 1-acyl-sn-glycero-3-phosphocholine + a fatty acid + H(+). Monomer: Snake venom phospholipase A2 (PLA2) that shows a high PLA2 activity (2110 umol/min/mg). Its function is as follows. Heterodimer (A and B chains): snake venom phospholipase A2 that shows a moderate PLA2 activity (1377 umol/min/mg). Acts as a presynaptic neurotoxin. In vivo, induces edema and produces neurotoxic symptoms in mice. It exhibits indirect hemolysis and a strong myonecrotic activity and is cytotoxic. PLA2 catalyzes the calcium-dependent hydrolysis of the 2-acyl groups in 3-sn-phosphoglycerides. The polypeptide is Acidic phospholipase A2 daboiatoxin B chain (Daboia siamensis (Eastern Russel's viper)).